The following is a 198-amino-acid chain: UPF0215 protein NEQ431 (198 aa).

The segment at 179 to 198 (TKGDSSKPRAGGDSNPGPAG) is disordered.

The protein belongs to the UPF0215 family.

This is UPF0215 protein NEQ431 from Nanoarchaeum equitans (strain Kin4-M).